The chain runs to 254 residues: Alcohol dehydrogenase (254 aa).

Position 10-33 (10-33) interacts with NAD(+); that stretch reads FVAGLGGIGLDTSREIVKSGPKNL. Serine 138 contributes to the substrate binding site. Tyrosine 151 functions as the Proton acceptor in the catalytic mechanism.

It belongs to the short-chain dehydrogenases/reductases (SDR) family. As to quaternary structure, homodimer.

The enzyme catalyses a primary alcohol + NAD(+) = an aldehyde + NADH + H(+). The catalysed reaction is a secondary alcohol + NAD(+) = a ketone + NADH + H(+). This is Alcohol dehydrogenase (Adh) from Drosophila differens (Fruit fly).